Here is a 110-residue protein sequence, read N- to C-terminus: Hydrogenase maturation factor HypA (110 aa).

Histidine 2 serves as a coordination point for Ni(2+). Zn(2+) contacts are provided by cysteine 70, cysteine 73, cysteine 86, and cysteine 89.

It belongs to the HypA/HybF family.

Its function is as follows. Involved in the maturation of [NiFe] hydrogenases. Required for nickel insertion into the metal center of the hydrogenase. The polypeptide is Hydrogenase maturation factor HypA (Geobacter sp. (strain M21)).